Consider the following 784-residue polypeptide: Toll-like receptor 2 (784 aa).

The signal sequence occupies residues 1–20; sequence MPHTLWMVWVLGVIISLSKE. Residues 21 to 588 lie on the Extracellular side of the membrane; the sequence is ESSNQASLSC…RLSVSECHRT (568 aa). Residues C30 and C36 are joined by a disulfide bond. LRR repeat units lie at residues 54-77, 78-101, 102-125, 126-150, 151-175, 176-199, 200-223, 224-250, 251-278, 279-308, 309-337, 338-361, 362-388, 389-414, 415-437, 438-457, 458-478, 479-500, and 501-524; these read VKSL…RCVN, LQAL…SLGS, LEHL…PLSS, LTFL…HLTK, LQIL…GLTF, LEEL…SIQN, VSHL…VTSS, VECL…TNSL, IKKF…QISG, LLEL…DPGK, VETL…LTER, VKRI…HLKS, LEYL…AWPS, LQTL…TLKN, LTNI…WPEK, MKYL…CIPK, TLEI…NLPQ, LKEL…LLPM, and LLVL…SFHT. Residue N114 is glycosylated (N-linked (GlcNAc...) asparagine). N-linked (GlcNAc...) asparagine glycosylation occurs at N199. C353 and C382 are disulfide-bonded. N414 carries an N-linked (GlcNAc...) asparagine glycan. A disulfide bridge links C432 with C454. N442 carries an N-linked (GlcNAc...) asparagine glycan. The LRRCT domain occupies 525 to 579; the sequence is LKTLEAGGNNFICSCEFLSFTQEQQALAKVLIDWPANYLCDSPSHVRGQQVQDVR. A helical transmembrane segment spans residues 589-609; it reads ALVSGMCCALFLLILLTGVLC. The Cytoplasmic portion of the chain corresponds to 610–784; that stretch reads HRFHGLWYMK…WVNLRAAIKS (175 aa). The TIR domain maps to 639 to 782; it reads ICYDAFVSYS…GFWVNLRAAI (144 aa). Residue K754 forms a Glycyl lysine isopeptide (Lys-Gly) (interchain with G-Cter in ubiquitin) linkage. An ATG16L1-binding motif motif is present at residues 761–778; the sequence is YLEWPMDEAQREGFWVNL.

It belongs to the Toll-like receptor family. Interacts with LY96, TLR1 and TLR6 (via extracellular domain). TLR2 seems to exist in heterodimers with either TLR1 or TLR6 before stimulation by the ligand. The heterodimers form bigger oligomers in response to their corresponding ligands as well as further heterotypic associations with other receptors such as CD14 and/or CD36. Binds MYD88 (via TIR domain). Interacts with TICAM1. Interacts with CNPY3. Interacts with ATG16L1. Interacts with PPP1R11. Interacts with TICAM2. Interacts with TIRAP. In terms of assembly, (Microbial infection) Interacts with M.tuberculosis EsxA. As to quaternary structure, (Microbial infection) Interacts with M.bovis MPB83. (Microbial infection) Interacts with Staphylococcus aureus protein SSL5. Post-translationally, glycosylation of Asn-442 is critical for secretion of the N-terminal ectodomain of TLR2. In terms of processing, ubiquitinated at Lys-754 by PPP1R11, leading to its degradation. Deubiquitinated by USP2. Highly expressed in peripheral blood leukocytes, in particular in monocytes, in bone marrow, lymph node and in spleen. Also detected in lung and in fetal liver. Levels are low in other tissues.

It is found in the membrane. It localises to the cytoplasmic vesicle. Its subcellular location is the phagosome membrane. The protein localises to the membrane raft. Functionally, cooperates with LY96 to mediate the innate immune response to bacterial lipoproteins and other microbial cell wall components. Cooperates with TLR1 or TLR6 to mediate the innate immune response to bacterial lipoproteins or lipopeptides. Acts via MYD88 and TRAF6, leading to NF-kappa-B activation, cytokine secretion and the inflammatory response. May also activate immune cells and promote apoptosis in response to the lipid moiety of lipoproteins. Recognizes mycoplasmal macrophage-activating lipopeptide-2kD (MALP-2), soluble tuberculosis factor (STF), phenol-soluble modulin (PSM) and B.burgdorferi outer surface protein A lipoprotein (OspA-L) cooperatively with TLR6. Stimulation of monocytes in vitro with M.tuberculosis PstS1 induces p38 MAPK and ERK1/2 activation primarily via this receptor, but also partially via TLR4. MAPK activation in response to bacterial peptidoglycan also occurs via this receptor. Acts as a receptor for M.tuberculosis lipoproteins LprA, LprG, LpqH and PstS1, some lipoproteins are dependent on other coreceptors (TLR1, CD14 and/or CD36); the lipoproteins act as agonists to modulate antigen presenting cell functions in response to the pathogen. M.tuberculosis HSP70 (dnaK) but not HSP65 (groEL-2) acts via this protein to stimulate NF-kappa-B expression. Recognizes M.tuberculosis major T-antigen EsxA (ESAT-6) which inhibits downstream MYD88-dependent signaling (shown in mouse). Forms activation clusters composed of several receptors depending on the ligand, these clusters trigger signaling from the cell surface and subsequently are targeted to the Golgi in a lipid-raft dependent pathway. Forms the cluster TLR2:TLR6:CD14:CD36 in response to diacylated lipopeptides and TLR2:TLR1:CD14 in response to triacylated lipopeptides. Required for normal uptake of M.tuberculosis, a process that is inhibited by M.tuberculosis LppM. The chain is Toll-like receptor 2 from Homo sapiens (Human).